Here is a 239-residue protein sequence, read N- to C-terminus: MSKAQTLSAADRAKLESLIGHDFAEKERLDRALTHASARTEKGSNYERLEFLGDRVLGLCIAELLFRTFGTAGEGELSVRLNQLVSAETCAAVADELNLHLYIRTGADVKKLTGKRMMNVRADVVESLIAAIYLDGGLEVARRFILRYWQGRAVRADGAKRDAKTELQEWSHAKFGVTPLYRVDERSGPDHDPRFKVTVEVAGIKPETGVERSKRAAEQVAATKMLEREGIWQQSPAGN.

The RNase III domain occupies 12-137 (RAKLESLIGH…LIAAIYLDGG (126 aa)). Position 50 (glutamate 50) interacts with Mg(2+). Aspartate 54 is a catalytic residue. Mg(2+)-binding residues include aspartate 123 and glutamate 126. Glutamate 126 is a catalytic residue. Positions 162–231 (DAKTELQEWS…ATKMLEREGI (70 aa)) constitute a DRBM domain.

This sequence belongs to the ribonuclease III family. In terms of assembly, homodimer. Requires Mg(2+) as cofactor.

Its subcellular location is the cytoplasm. The enzyme catalyses Endonucleolytic cleavage to 5'-phosphomonoester.. In terms of biological role, digests double-stranded RNA. Involved in the processing of primary rRNA transcript to yield the immediate precursors to the large and small rRNAs (23S and 16S). Processes some mRNAs, and tRNAs when they are encoded in the rRNA operon. Processes pre-crRNA and tracrRNA of type II CRISPR loci if present in the organism. The chain is Ribonuclease 3 from Rhizobium etli (strain CIAT 652).